The chain runs to 1173 residues: Eukaryotic translation initiation factor 3 subunit A (1173 aa).

One can recognise a PCI domain in the interval 319–502; that stretch reads LQRMAAHVLL…NSIYFGTDLT (184 aa). Disordered regions lie at residues 589–613 and 836–1173; these read QNNA…LAEQ and AAEA…PVQL. Basic and acidic residues-rich tracts occupy residues 836–900, 925–1011, 1028–1081, and 1090–1125; these read AAEA…RGGD, DRNE…EPDS, SRDD…DAAP, and DAPR…RAPK. Positions 1128-1142 are enriched in gly residues; the sequence is GPSGGTGTAAGGGGN. Residues 1149–1165 are compositionally biased toward basic and acidic residues; it reads PRDEPAPKRDQPQDKGK.

Belongs to the eIF-3 subunit A family. Component of the eukaryotic translation initiation factor 3 (eIF-3) complex. The eIF-3 complex interacts with pix.

It is found in the cytoplasm. In terms of biological role, RNA-binding component of the eukaryotic translation initiation factor 3 (eIF-3) complex, which is involved in protein synthesis of a specialized repertoire of mRNAs and, together with other initiation factors, stimulates binding of mRNA and methionyl-tRNAi to the 40S ribosome. The eIF-3 complex specifically targets and initiates translation of a subset of mRNAs involved in cell proliferation. The protein is Eukaryotic translation initiation factor 3 subunit A of Drosophila persimilis (Fruit fly).